A 211-amino-acid chain; its full sequence is Ubiquitin-conjugating enzyme E2 S (211 aa).

A UBC core domain is found at 11 to 157; it reads HVIRQVYKEV…ARLMTEIHAH (147 aa). Cys95 (glycyl thioester intermediate) is an active-site residue. Basic and acidic residues predominate over residues 157 to 167; that stretch reads HSSSLRGKDPT. The interval 157–211 is disordered; sequence HSSSLRGKDPTDPCSSASVTGALGDGPMAKKHAGDRDKKLAAKKKTDKKRALRRL. Positions 197–211 are enriched in basic residues; the sequence is AAKKKTDKKRALRRL.

The protein belongs to the ubiquitin-conjugating enzyme family.

It carries out the reaction S-ubiquitinyl-[E1 ubiquitin-activating enzyme]-L-cysteine + [E2 ubiquitin-conjugating enzyme]-L-cysteine = [E1 ubiquitin-activating enzyme]-L-cysteine + S-ubiquitinyl-[E2 ubiquitin-conjugating enzyme]-L-cysteine.. It participates in protein modification; protein ubiquitination. In terms of biological role, catalyzes the covalent attachment of ubiquitin to other proteins. Acts as an essential factor of the anaphase promoting complex/cyclosome (APC/C), a cell cycle-regulated ubiquitin ligase that controls progression through mitosis. Acts by specifically elongating 'Lys-11'-linked polyubiquitin chains initiated by the E2 enzyme ube2c/ubch10 on APC/C substrates, enhancing the degradation of APC/C substrates by the proteasome and promoting mitotic exit. This chain is Ubiquitin-conjugating enzyme E2 S (ube2s), found in Aquarana catesbeiana (American bullfrog).